The primary structure comprises 899 residues: Valine--tRNA ligase (899 aa).

The 'HIGH' region signature appears at 60–70 (PNVTGVLHMGH). The 'KMSKS' region motif lies at 539-543 (KMSKS). Lys542 provides a ligand contact to ATP. Residues 827–898 (AGLIDLDEEQ…KQGLEKLAAL (72 aa)) are a coiled coil.

This sequence belongs to the class-I aminoacyl-tRNA synthetase family. ValS type 1 subfamily. In terms of assembly, monomer.

Its subcellular location is the cytoplasm. It catalyses the reaction tRNA(Val) + L-valine + ATP = L-valyl-tRNA(Val) + AMP + diphosphate. Catalyzes the attachment of valine to tRNA(Val). As ValRS can inadvertently accommodate and process structurally similar amino acids such as threonine, to avoid such errors, it has a 'posttransfer' editing activity that hydrolyzes mischarged Thr-tRNA(Val) in a tRNA-dependent manner. This is Valine--tRNA ligase from Syntrophotalea carbinolica (strain DSM 2380 / NBRC 103641 / GraBd1) (Pelobacter carbinolicus).